Reading from the N-terminus, the 223-residue chain is Deoxyribose-phosphate aldolase (223 aa).

The active-site Proton donor/acceptor is the Asp89. The Schiff-base intermediate with acetaldehyde role is filled by Lys152. The Proton donor/acceptor role is filled by Lys181.

This sequence belongs to the DeoC/FbaB aldolase family. DeoC type 1 subfamily.

The protein localises to the cytoplasm. It catalyses the reaction 2-deoxy-D-ribose 5-phosphate = D-glyceraldehyde 3-phosphate + acetaldehyde. Its pathway is carbohydrate degradation; 2-deoxy-D-ribose 1-phosphate degradation; D-glyceraldehyde 3-phosphate and acetaldehyde from 2-deoxy-alpha-D-ribose 1-phosphate: step 2/2. Catalyzes a reversible aldol reaction between acetaldehyde and D-glyceraldehyde 3-phosphate to generate 2-deoxy-D-ribose 5-phosphate. In Listeria innocua serovar 6a (strain ATCC BAA-680 / CLIP 11262), this protein is Deoxyribose-phosphate aldolase.